A 212-amino-acid polypeptide reads, in one-letter code: Thymidylate kinase (212 aa).

ATP is bound by residues 16–21 (RAGKTT), Arg97, Arg182, and Lys192.

Belongs to the thymidylate kinase family. It depends on Mg(2+) as a cofactor.

The catalysed reaction is dTMP + ATP = dTDP + ADP. It participates in pyrimidine metabolism; dTTP biosynthesis. Functionally, catalyzes the phosphorylation of thymidine monophosphate (dTMP) to thymidine diphosphate (dTDP), the immediate precursor for the DNA building block dTTP, with ATP as the preferred phosphoryl donor in the presence of Mg(2+). This chain is Thymidylate kinase (dtymk), found in Danio rerio (Zebrafish).